Here is a 283-residue protein sequence, read N- to C-terminus: Acetyl-coenzyme A carboxylase carboxyl transferase subunit beta (283 aa).

The region spanning 29 to 283 (LWVACPKCQQ…LKLHERGAHY (255 aa)) is the CoA carboxyltransferase N-terminal domain. The Zn(2+) site is built by C33, C36, C51, and C54. The C4-type zinc finger occupies 33–54 (CPKCQQSIYHKDLGYYRTCPVC).

Belongs to the AccD/PCCB family. In terms of assembly, acetyl-CoA carboxylase is a heterohexamer composed of biotin carboxyl carrier protein (AccB), biotin carboxylase (AccC) and two subunits each of ACCase subunit alpha (AccA) and ACCase subunit beta (AccD). Zn(2+) serves as cofactor.

Its subcellular location is the cytoplasm. It catalyses the reaction N(6)-carboxybiotinyl-L-lysyl-[protein] + acetyl-CoA = N(6)-biotinyl-L-lysyl-[protein] + malonyl-CoA. It functions in the pathway lipid metabolism; malonyl-CoA biosynthesis; malonyl-CoA from acetyl-CoA: step 1/1. In terms of biological role, component of the acetyl coenzyme A carboxylase (ACC) complex. Biotin carboxylase (BC) catalyzes the carboxylation of biotin on its carrier protein (BCCP) and then the CO(2) group is transferred by the transcarboxylase to acetyl-CoA to form malonyl-CoA. The chain is Acetyl-coenzyme A carboxylase carboxyl transferase subunit beta from Latilactobacillus sakei subsp. sakei (strain 23K) (Lactobacillus sakei subsp. sakei).